The primary structure comprises 222 residues: Putative N-acetylmannosamine-6-phosphate 2-epimerase (222 aa).

This sequence belongs to the NanE family.

The enzyme catalyses an N-acyl-D-glucosamine 6-phosphate = an N-acyl-D-mannosamine 6-phosphate. It participates in amino-sugar metabolism; N-acetylneuraminate degradation; D-fructose 6-phosphate from N-acetylneuraminate: step 3/5. Functionally, converts N-acetylmannosamine-6-phosphate (ManNAc-6-P) to N-acetylglucosamine-6-phosphate (GlcNAc-6-P). In Staphylococcus aureus (strain bovine RF122 / ET3-1), this protein is Putative N-acetylmannosamine-6-phosphate 2-epimerase.